A 273-amino-acid polypeptide reads, in one-letter code: Proteasome subunit beta type-10 (273 aa).

Met-1 is subject to N-acetylmethionine. Positions 1–39 (MLKQAVEHRGGFSFENCQRNASLEHVLPGLRVPLARKTG) are cleaved as a propeptide — removed in mature form. The active-site Nucleophile is Thr-40. Ser-230 is subject to Phosphoserine.

The protein belongs to the peptidase T1B family. In terms of assembly, the 26S proteasome consists of a 20S proteasome core and two 19S regulatory subunits. The 20S proteasome core is composed of 28 subunits that are arranged in four stacked rings, resulting in a barrel-shaped structure. The two end rings are each formed by seven alpha subunits, and the two central rings are each formed by seven beta subunits. The catalytic chamber with the active sites is on the inside of the barrel. Component of the immunoproteasome, where it displaces the equivalent housekeeping subunit PSMB7. Component of the spermatoproteasome, a form of the proteasome specifically found in testis. Post-translationally, autocleaved. The resulting N-terminal Thr residue of the mature subunit is responsible for the nucleophile proteolytic activity.

The protein localises to the cytoplasm. It localises to the nucleus. It catalyses the reaction Cleavage of peptide bonds with very broad specificity.. In terms of biological role, the proteasome is a multicatalytic proteinase complex which is characterized by its ability to cleave peptides with Arg, Phe, Tyr, Leu, and Glu adjacent to the leaving group at neutral or slightly basic pH. The proteasome has an ATP-dependent proteolytic activity. This subunit is involved in antigen processing to generate class I binding peptides. This Rattus norvegicus (Rat) protein is Proteasome subunit beta type-10 (Psmb10).